A 199-amino-acid chain; its full sequence is UPF0056 membrane protein bbp_399 (199 aa).

6 consecutive transmembrane segments (helical) span residues 7 to 29 (VTIL…SILK), 39 to 58 (ILIR…LFAG), 71 to 93 (TVSV…PTYE), 108 to 130 (FLVP…MLLS), 137 to 156 (ILYL…VILL), and 176 to 198 (LMGL…SWFY).

It belongs to the UPF0056 (MarC) family.

The protein resides in the cell membrane. In Buchnera aphidicola subsp. Baizongia pistaciae (strain Bp), this protein is UPF0056 membrane protein bbp_399.